We begin with the raw amino-acid sequence, 194 residues long: Alkyl hydroperoxide reductase AhpD (194 aa).

Residue cysteine 132 is the Proton donor of the active site. Cysteine 132 and cysteine 135 are disulfide-bonded. Cysteine 135 functions as the Cysteine sulfenic acid (-SOH) intermediate in the catalytic mechanism.

It belongs to the AhpD family.

It carries out the reaction N(6)-[(R)-dihydrolipoyl]-L-lysyl-[lipoyl-carrier protein] + a hydroperoxide = N(6)-[(R)-lipoyl]-L-lysyl-[lipoyl-carrier protein] + an alcohol + H2O. Functionally, antioxidant protein with alkyl hydroperoxidase activity. Required for the reduction of the AhpC active site cysteine residues and for the regeneration of the AhpC enzyme activity. The sequence is that of Alkyl hydroperoxide reductase AhpD from Koribacter versatilis (strain Ellin345).